Reading from the N-terminus, the 110-residue chain is Protein RnfH (110 aa).

The segment at 90–110 (VDKTRREGSIEGRKWLPKDSR) is disordered.

The protein belongs to the UPF0125 (RnfH) family.

In Burkholderia mallei (strain NCTC 10229), this protein is Protein RnfH.